Here is a 234-residue protein sequence, read N- to C-terminus: Phosphoribosylaminoimidazole-succinocarboxamide synthase (234 aa).

The protein belongs to the SAICAR synthetase family.

It carries out the reaction 5-amino-1-(5-phospho-D-ribosyl)imidazole-4-carboxylate + L-aspartate + ATP = (2S)-2-[5-amino-1-(5-phospho-beta-D-ribosyl)imidazole-4-carboxamido]succinate + ADP + phosphate + 2 H(+). It participates in purine metabolism; IMP biosynthesis via de novo pathway; 5-amino-1-(5-phospho-D-ribosyl)imidazole-4-carboxamide from 5-amino-1-(5-phospho-D-ribosyl)imidazole-4-carboxylate: step 1/2. The sequence is that of Phosphoribosylaminoimidazole-succinocarboxamide synthase from Streptococcus agalactiae serotype V (strain ATCC BAA-611 / 2603 V/R).